We begin with the raw amino-acid sequence, 200 residues long: Holliday junction resolvase RecU (200 aa).

Positions 1 to 25 (MTIRYPNGKRYNQASQPHKTPIKKH) are disordered. 4 residues coordinate Mg(2+): Thr-85, Asp-87, Glu-100, and Gln-119.

This sequence belongs to the RecU family. Requires Mg(2+) as cofactor.

The protein localises to the cytoplasm. The catalysed reaction is Endonucleolytic cleavage at a junction such as a reciprocal single-stranded crossover between two homologous DNA duplexes (Holliday junction).. Endonuclease that resolves Holliday junction intermediates in genetic recombination. Cleaves mobile four-strand junctions by introducing symmetrical nicks in paired strands. Promotes annealing of linear ssDNA with homologous dsDNA. Required for DNA repair, homologous recombination and chromosome segregation. This is Holliday junction resolvase RecU from Bacillus cereus (strain ZK / E33L).